Reading from the N-terminus, the 58-residue chain is Preprotein translocase subunit SecG (58 aa).

The Cytoplasmic segment spans residues 1-32 (MAQKKKSSGSGLMSSAGLMTYYDADKKAIHVQ). A helical membrane pass occupies residues 33–54 (PKTVFIFGAICGIVILAFSAGF). Over 55 to 58 (GLWP) the chain is Extracellular.

This sequence belongs to the SEC61-beta family. In terms of assembly, component of the protein translocase complex. Heterotrimer consisting of alpha (SecY), beta (SecG) and gamma (SecE) subunits. Can form oligomers of the heterotrimer.

It localises to the cell membrane. Involved in protein export. The function of the beta subunit is unknown, but it may be involved in stabilization of the trimeric complex. This is Preprotein translocase subunit SecG from Methanococcoides burtonii (strain DSM 6242 / NBRC 107633 / OCM 468 / ACE-M).